The primary structure comprises 101 residues: Urease subunit beta (101 aa).

The protein belongs to the urease beta subunit family. In terms of assembly, heterotrimer of UreA (gamma), UreB (beta) and UreC (alpha) subunits. Three heterotrimers associate to form the active enzyme.

It is found in the cytoplasm. It catalyses the reaction urea + 2 H2O + H(+) = hydrogencarbonate + 2 NH4(+). It participates in nitrogen metabolism; urea degradation; CO(2) and NH(3) from urea (urease route): step 1/1. This is Urease subunit beta from Burkholderia cenocepacia (strain ATCC BAA-245 / DSM 16553 / LMG 16656 / NCTC 13227 / J2315 / CF5610) (Burkholderia cepacia (strain J2315)).